The sequence spans 225 residues: Cytidylate kinase (225 aa).

ATP is bound at residue 12 to 20; it reads GPSGAGKGT.

This sequence belongs to the cytidylate kinase family. Type 1 subfamily.

The protein resides in the cytoplasm. The enzyme catalyses CMP + ATP = CDP + ADP. It catalyses the reaction dCMP + ATP = dCDP + ADP. The polypeptide is Cytidylate kinase (Pectobacterium carotovorum subsp. carotovorum (strain PC1)).